The primary structure comprises 1185 residues: MHVHVCVCLCVCIYTSSCVCACVHMCMRDALLAEGRGGGLAAADDFLYLECCKCFSQESQIAMVCQERSQNETYEVKMNNDTEACRATLNLEERRSVAIRSRENVVFVQTDKPTYKPGQKDVNGIAQFFLDTYTFTYPNITLKDPQNNRIFQRQNVTSFRNITQLSFQLISEPMFGDYWIVVKRNSRETVTHQFAVKRYVLPKFEVTVNAPQTVTISDDEFQVDVCAYNFGQPVQGETQIRVCREYFSSSNCEKNENEICEQFIAQVQTNLDIFTLLCSSFLTVMQISEKTSVFITQLLGTVNFENMDTFYRRGISYFGQLKFSDPNNVPMVNKLLQLELNDEFIGNYTTDENGEAQFSIDTSDIFDPEFNLKVRHQRTEECYLPSWLTPQYLDAHFLVSRFYSRTNSFLKIVPEPKQLECNQQKVVTVHYSLNSEAYEDDSNVKFFYLNGNFSFPISISADLAPAAVLFVYTLHPSGEIVADSVRFQVDKCFKHKVNIKFSNEQGLPGSNASLCLQAAPVLFCALRAVDRNVLLLKSEQQLSAESVSSLYNMVPSIEPYGYFYHGLNLDDGKEDPCIPQRDMFYNGLYYTPVSNYGDGDIYNIVRVRSLRILENIIQTVRTNFPETWMWDLVSVSSSGSANLSFLIPDTITQWEASGFCVNGDVGFGISSTTTLEVSQPFFIEIASPFSVVQNEQFDLIVNVFSYRNTCVEVSYIWECLPGKVNITVVAESKQSSACPNEGMEQQKLNWKDTVVQSFLVEFLFLGDILGLALQNLVVLQMPYGSGEQNAALLASDTYVLDYLKSTEQLTEEVQSKAFFLSILGYQRQLSFKNSDGSYSVFWQQSQKGSIWLSALTFKTLERMKKYVFIDENVQKQTLIWLSSQQKTSGCFKNDGQLFNHALRNALFCLEAALDSGVTNGYNHAILAYAFALAGKEKQVESLLQTLDQSAPKLSKRYYWERERKPKTEEFPSFIPWAPSAQTEKSCYVLLAVISRKIPDLTYASKIVQWLAQRMNSHGGFSSNQVINVGLILIAARGEEGLFSKDQNTVTFSSEGSSEIFQVNGHNRLLVQRSEVTQAPGEYTVDVEGHGCTFIQIFRYTGIRNKSSMVVIDVKMLSGFTPTMSSIEEVNNRSLIFQHKDSYIEYKRADSFPFSVEQSNLVFNIQPAPAMVYDYYEKGRQATAMP.

Residues 1 to 21 (MHVHVCVCLCVCIYTSSCVCA) form the signal peptide. Residues Asn-80, Asn-155, Asn-347, Asn-452, and Asn-725 are each glycosylated (N-linked (GlcNAc...) asparagine).

It belongs to the protease inhibitor I39 (alpha-2-macroglobulin) family. In terms of assembly, homotetramer.

The protein resides in the secreted. Its function is as follows. Is able to inhibit all four classes of proteinases by a unique 'trapping' mechanism. This is Ovostatin homolog 1 (OVOS1) from Homo sapiens (Human).